An 870-amino-acid polypeptide reads, in one-letter code: Lysosomal cholesterol signaling protein (870 aa).

Residues Met-1–Ser-38 are Lumenal-facing. The tract at residues Met-1 to Met-370 is PIN-like transporter. 3 N-linked (GlcNAc...) asparagine glycosylation sites follow: Asn-9, Asn-15, and Asn-29. A helical transmembrane segment spans residues Ile-39–Ala-59. 2 residues coordinate cholesterol: Phe-43 and Tyr-57. Residues Gly-60–Arg-79 are Cytoplasmic-facing. Residues Phe-80–Trp-100 form a helical membrane-spanning segment. Topologically, residues Ser-101 to Tyr-104 are lumenal. The helical transmembrane segment at Ser-105–Ala-125 threads the bilayer. Topologically, residues Ser-126 to Lys-133 are cytoplasmic. Residues Ala-134–Val-154 traverse the membrane as a discontinuously helical segment. The Lumenal segment spans residues Glu-155–Gln-167. The helical transmembrane segment at Tyr-168–Cys-188 threads the bilayer. Topologically, residues Glu-189 to Arg-213 are cytoplasmic. The discontinuously helical transmembrane segment at Val-214–Asp-234 threads the bilayer. The Lumenal portion of the chain corresponds to Arg-235–Asn-243. A discontinuously helical transmembrane segment spans residues Phe-244–Met-264. The Cytoplasmic segment spans residues Val-265–Lys-273. Positions 266, 267, and 268 each coordinate cholesterol. The helical transmembrane segment at Ser-274–Cys-294 threads the bilayer. Topologically, residues Arg-295–Asn-315 are lumenal. Asn-309 carries N-linked (GlcNAc...) asparagine glycosylation. The chain crosses the membrane as a discontinuously helical span at residues Tyr-316–Phe-336. Topologically, residues Asn-337–Gly-346 are cytoplasmic. A helical transmembrane segment spans residues Met-347–Phe-367. Over Pro-368–Asn-381 the chain is Lumenal. Residues Gln-380–Leu-717 are GPCR. N-linked (GlcNAc...) asparagine glycosylation is present at Asn-381. The helical transmembrane segment at Val-382–Leu-402 threads the bilayer. At Leu-403–Leu-414 the chain is on the cytoplasmic side. A helical transmembrane segment spans residues Thr-415–Val-435. At Lys-436–Lys-438 the chain is on the lumenal side. A helical transmembrane segment spans residues Asn-439–Leu-459. At Trp-460–Pro-480 the chain is on the cytoplasmic side. Residues Val-481–Ile-501 form a helical membrane-spanning segment. At Thr-502–Gln-520 the chain is on the lumenal side. A helical membrane pass occupies residues Met-521–Cys-541. Topologically, residues Met-542–Leu-660 are cytoplasmic. Arg-657 contacts cholesterol. Residues Leu-661 to Phe-681 traverse the membrane as a helical segment. The Lumenal portion of the chain corresponds to Asn-682–Glu-691. A helical membrane pass occupies residues Leu-692–Gly-712. Topologically, residues Leu-713–Thr-870 are cytoplasmic. The DEP domain maps to Tyr-757 to Gln-835.

Homodimer; via the transporter region and DEP domain. Interacts with the GATOR1 complex and prevents interaction between GATOR1 and KICSTOR; this interaction is disrupted upon cholesterol starvation.

It localises to the lysosome membrane. Cholesterol-binding protein that acts as a regulator of mTORC1 signaling pathway. Acts as a sensor of cholesterol to signal cholesterol sufficiency to mTORC1: in presence of cholesterol, binds cholesterol, leading to disruption of the interaction between the GATOR1 and KICSTOR complexes and promotion of mTORC1 signaling. Upon cholesterol starvation, GPR155/LYCHOS is unable to perturb the association between GATOR1 and KICSTOR, leading to mTORC1 signaling inhibition. Binds indole-3-acetic acid and may play a role in tryptophan metabolism. This Homo sapiens (Human) protein is Lysosomal cholesterol signaling protein.